Consider the following 148-residue polypeptide: Snaclec crotocetin (148 aa).

A signal peptide spans 1–23 (MGRLVFVSFGLLVVFLSLTGTGA). 3 cysteine pairs are disulfide-bonded: cysteine 27–cysteine 38, cysteine 55–cysteine 144, and cysteine 121–cysteine 136. The C-type lectin domain occupies 34 to 145 (YEGHCYKVFK…CSKTHKVVCK (112 aa)).

This sequence belongs to the snaclec family. In terms of assembly, heterodimer; disulfide-linked. In terms of tissue distribution, expressed by the venom gland.

It is found in the secreted. Functionally, interferes with one step of hemostasis (modulation of platelet aggregation, or coagulation cascade, for example). The protein is Snaclec crotocetin of Crotalus durissus terrificus (South American rattlesnake).